The chain runs to 501 residues: Pyruvate kinase 1 (501 aa).

R50 serves as a coordination point for substrate. 4 residues coordinate K(+): N52, S54, D85, and T86. N52–H55 is a binding site for ATP. The ATP site is built by R92 and K178. E243 serves as a coordination point for Mg(2+). Residues G266, D267, and T299 each contribute to the substrate site. D267 contacts Mg(2+).

It belongs to the pyruvate kinase family. Homotetramer. The cofactor is Mg(2+). K(+) is required as a cofactor.

The catalysed reaction is pyruvate + ATP = phosphoenolpyruvate + ADP + H(+). It participates in carbohydrate degradation; glycolysis; pyruvate from D-glyceraldehyde 3-phosphate: step 5/5. The protein is Pyruvate kinase 1 (PYK1) of Candida glabrata (strain ATCC 2001 / BCRC 20586 / JCM 3761 / NBRC 0622 / NRRL Y-65 / CBS 138) (Yeast).